We begin with the raw amino-acid sequence, 203 residues long: Outer-membrane lipoprotein carrier protein (203 aa).

Residues 1–21 form the signal peptide; that stretch reads MKKLILIGCLMAGMNINVAWA.

It belongs to the LolA family. Monomer.

The protein resides in the periplasm. In terms of biological role, participates in the translocation of lipoproteins from the inner membrane to the outer membrane. Only forms a complex with a lipoprotein if the residue after the N-terminal Cys is not an aspartate (The Asp acts as a targeting signal to indicate that the lipoprotein should stay in the inner membrane). The chain is Outer-membrane lipoprotein carrier protein from Photorhabdus laumondii subsp. laumondii (strain DSM 15139 / CIP 105565 / TT01) (Photorhabdus luminescens subsp. laumondii).